The following is a 440-amino-acid chain: Long-chain alkane monooxygenase (440 aa).

FMN is bound by residues aspartate 58, 137 to 138, tyrosine 158, and 227 to 230; these read SH and AGMS.

Belongs to the NtaA/SnaA/DszA monooxygenase family. As to quaternary structure, homodimer.

The protein localises to the secreted. The catalysed reaction is a long-chain alkane + FMNH2 + O2 = a long chain fatty alcohol + FMN + H2O + H(+). Functionally, involved in the degradation of long-chain alkanes. Converts alkanes ranging from C(15) to C(36) into their corresponding primary alcohols. The polypeptide is Long-chain alkane monooxygenase (Geobacillus thermodenitrificans (strain NG80-2)).